A 231-amino-acid polypeptide reads, in one-letter code: MSLADTIRSSLVPIHREGYRFIAAFGIGSVILGLLWEPLFWIGLLLTAWCAYFFRDPQRITPVDDRLVIAPADGIVSSVGPALPPPELGLSGEFTRVSVFMNVFSCHINRAPVRGRISLIEHRPGKFLNADLDKASMENERNSLIIESPYGPVAVVQIAGLIARRIVCWAEAPGEISVGERFGLIRFGSRVDVYLPREARPRVAVGQVSVGGETIIAEFGSNAPPPLVRVS.

The active-site Schiff-base intermediate with substrate; via pyruvic acid is serine 189. Position 189 is a pyruvic acid (Ser); by autocatalysis (serine 189).

Belongs to the phosphatidylserine decarboxylase family. PSD-A subfamily. Heterodimer of a large membrane-associated beta subunit and a small pyruvoyl-containing alpha subunit. It depends on pyruvate as a cofactor. Post-translationally, is synthesized initially as an inactive proenzyme. Formation of the active enzyme involves a self-maturation process in which the active site pyruvoyl group is generated from an internal serine residue via an autocatalytic post-translational modification. Two non-identical subunits are generated from the proenzyme in this reaction, and the pyruvate is formed at the N-terminus of the alpha chain, which is derived from the carboxyl end of the proenzyme. The post-translation cleavage follows an unusual pathway, termed non-hydrolytic serinolysis, in which the side chain hydroxyl group of the serine supplies its oxygen atom to form the C-terminus of the beta chain, while the remainder of the serine residue undergoes an oxidative deamination to produce ammonia and the pyruvoyl prosthetic group on the alpha chain.

The protein resides in the cell membrane. The catalysed reaction is a 1,2-diacyl-sn-glycero-3-phospho-L-serine + H(+) = a 1,2-diacyl-sn-glycero-3-phosphoethanolamine + CO2. The protein operates within phospholipid metabolism; phosphatidylethanolamine biosynthesis; phosphatidylethanolamine from CDP-diacylglycerol: step 2/2. Its function is as follows. Catalyzes the formation of phosphatidylethanolamine (PtdEtn) from phosphatidylserine (PtdSer). This chain is Phosphatidylserine decarboxylase proenzyme, found in Chelativorans sp. (strain BNC1).